Here is a 131-residue protein sequence, read N- to C-terminus: Small ribosomal subunit protein bS6 (131 aa).

The tract at residues 98-131 (EASPMVKAKDERRERRDDFANETADDSDAGDSEE) is disordered. The segment covering 104 to 116 (KAKDERRERRDDF) has biased composition (basic and acidic residues). The span at 120–131 (TADDSDAGDSEE) shows a compositional bias: acidic residues.

The protein belongs to the bacterial ribosomal protein bS6 family.

Its function is as follows. Binds together with bS18 to 16S ribosomal RNA. The polypeptide is Small ribosomal subunit protein bS6 (Enterobacter sp. (strain 638)).